A 348-amino-acid chain; its full sequence is S-adenosylmethionine:tRNA ribosyltransferase-isomerase (348 aa).

This sequence belongs to the QueA family. Monomer.

It localises to the cytoplasm. The catalysed reaction is 7-aminomethyl-7-carbaguanosine(34) in tRNA + S-adenosyl-L-methionine = epoxyqueuosine(34) in tRNA + adenine + L-methionine + 2 H(+). The protein operates within tRNA modification; tRNA-queuosine biosynthesis. Functionally, transfers and isomerizes the ribose moiety from AdoMet to the 7-aminomethyl group of 7-deazaguanine (preQ1-tRNA) to give epoxyqueuosine (oQ-tRNA). This Polynucleobacter asymbioticus (strain DSM 18221 / CIP 109841 / QLW-P1DMWA-1) (Polynucleobacter necessarius subsp. asymbioticus) protein is S-adenosylmethionine:tRNA ribosyltransferase-isomerase.